The following is a 136-amino-acid chain: Large ribosomal subunit protein uL16c (136 aa).

The protein belongs to the universal ribosomal protein uL16 family. Part of the 50S ribosomal subunit.

It localises to the plastid. It is found in the chloroplast. The polypeptide is Large ribosomal subunit protein uL16c (Illicium oligandrum (Star anise)).